The sequence spans 164 residues: NAD(P)H-quinone oxidoreductase subunit I, chloroplastic (164 aa).

4Fe-4S ferredoxin-type domains are found at residues 55-84 (GRIH…VDWK) and 95-124 (LNYS…MTEE). [4Fe-4S] cluster is bound by residues Cys64, Cys67, Cys70, Cys74, Cys104, Cys107, Cys110, and Cys114.

This sequence belongs to the complex I 23 kDa subunit family. As to quaternary structure, NDH is composed of at least 16 different subunits, 5 of which are encoded in the nucleus. [4Fe-4S] cluster is required as a cofactor.

The protein localises to the plastid. The protein resides in the chloroplast thylakoid membrane. The enzyme catalyses a plastoquinone + NADH + (n+1) H(+)(in) = a plastoquinol + NAD(+) + n H(+)(out). It carries out the reaction a plastoquinone + NADPH + (n+1) H(+)(in) = a plastoquinol + NADP(+) + n H(+)(out). In terms of biological role, NDH shuttles electrons from NAD(P)H:plastoquinone, via FMN and iron-sulfur (Fe-S) centers, to quinones in the photosynthetic chain and possibly in a chloroplast respiratory chain. The immediate electron acceptor for the enzyme in this species is believed to be plastoquinone. Couples the redox reaction to proton translocation, and thus conserves the redox energy in a proton gradient. The sequence is that of NAD(P)H-quinone oxidoreductase subunit I, chloroplastic from Daucus carota (Wild carrot).